Reading from the N-terminus, the 255-residue chain is 5'-nucleotidase SurE (255 aa).

Asp-8, Asp-9, Ser-40, and Asn-93 together coordinate a divalent metal cation.

Belongs to the SurE nucleotidase family. The cofactor is a divalent metal cation.

Its subcellular location is the cytoplasm. The enzyme catalyses a ribonucleoside 5'-phosphate + H2O = a ribonucleoside + phosphate. In terms of biological role, nucleotidase that shows phosphatase activity on nucleoside 5'-monophosphates. The sequence is that of 5'-nucleotidase SurE from Bradyrhizobium diazoefficiens (strain JCM 10833 / BCRC 13528 / IAM 13628 / NBRC 14792 / USDA 110).